The primary structure comprises 299 residues: Diaminopimelate epimerase (299 aa).

N11 and N63 together coordinate substrate. The Proton donor role is filled by C72. Substrate-binding positions include 73 to 74 (GN), N211, and 229 to 230 (ER). The active-site Proton acceptor is the C238. 239-240 (GT) serves as a coordination point for substrate.

The protein belongs to the diaminopimelate epimerase family. Homodimer.

The protein localises to the cytoplasm. The catalysed reaction is (2S,6S)-2,6-diaminopimelate = meso-2,6-diaminopimelate. Its pathway is amino-acid biosynthesis; L-lysine biosynthesis via DAP pathway; DL-2,6-diaminopimelate from LL-2,6-diaminopimelate: step 1/1. In terms of biological role, catalyzes the stereoinversion of LL-2,6-diaminopimelate (L,L-DAP) to meso-diaminopimelate (meso-DAP), a precursor of L-lysine and an essential component of the bacterial peptidoglycan. This is Diaminopimelate epimerase from Natranaerobius thermophilus (strain ATCC BAA-1301 / DSM 18059 / JW/NM-WN-LF).